Reading from the N-terminus, the 466-residue chain is A-type ATP synthase subunit B (466 aa).

This sequence belongs to the ATPase alpha/beta chains family. Has multiple subunits with at least A(3), B(3), C, D, E, F, H, I and proteolipid K(x).

The protein localises to the cell membrane. Functionally, component of the A-type ATP synthase that produces ATP from ADP in the presence of a proton gradient across the membrane. The B chain is a regulatory subunit. The protein is A-type ATP synthase subunit B of Sulfolobus acidocaldarius (strain ATCC 33909 / DSM 639 / JCM 8929 / NBRC 15157 / NCIMB 11770).